A 43-amino-acid chain; its full sequence is Thymosin beta-12 (43 aa).

Composition is skewed to basic and acidic residues over residues 1–25 (MSDK…ETQE) and 33–43 (ETIEQEKQATA). The interval 1 to 43 (MSDKPDLAEVSNFDKTKLKKTETQEKNPLPTKETIEQEKQATA) is disordered. An N-acetylserine modification is found at S2.

Belongs to the thymosin beta family.

Its subcellular location is the cytoplasm. It is found in the cytoskeleton. Functionally, plays an important role in the organization of the cytoskeleton. Binds to and sequesters actin monomers (G actin) and therefore inhibits actin polymerization. The sequence is that of Thymosin beta-12 from Oncorhynchus mykiss (Rainbow trout).